The following is a 112-amino-acid chain: Nucleoid-associated protein FTW_0607 (112 aa).

The disordered stretch occupies residues 1–27; sequence MNFDMSKLMQQAQKMQEQMKKAQQERE. A compositionally biased stretch (basic and acidic residues) spans 17 to 27; that stretch reads EQMKKAQQERE.

Belongs to the YbaB/EbfC family. In terms of assembly, homodimer.

The protein resides in the cytoplasm. It is found in the nucleoid. Its function is as follows. Binds to DNA and alters its conformation. May be involved in regulation of gene expression, nucleoid organization and DNA protection. The polypeptide is Nucleoid-associated protein FTW_0607 (Francisella tularensis subsp. tularensis (strain WY96-3418)).